We begin with the raw amino-acid sequence, 183 residues long: Large ribosomal subunit protein uL6 (183 aa).

Belongs to the universal ribosomal protein uL6 family. In terms of assembly, part of the 50S ribosomal subunit.

In terms of biological role, this protein binds to the 23S rRNA, and is important in its secondary structure. It is located near the subunit interface in the base of the L7/L12 stalk, and near the tRNA binding site of the peptidyltransferase center. The chain is Large ribosomal subunit protein uL6 from Malacoplasma penetrans (strain HF-2) (Mycoplasma penetrans).